A 340-amino-acid polypeptide reads, in one-letter code: Sterol-4-alpha-carboxylate 3-dehydrogenase erg26, decarboxylating (340 aa).

The Proton acceptor role is filled by Y144. K148 is a binding site for NAD(+).

The protein belongs to the 3-beta-HSD family. In terms of assembly, heterotetramer of erg25, erg26, erg27 and erg28. Erg28 acts as a scaffold to tether erg27 and other 4,4-demethylation-related enzymes, forming a demethylation enzyme complex, in the endoplasmic reticulum.

The protein resides in the endoplasmic reticulum membrane. It catalyses the reaction 4beta-methylzymosterol-4alpha-carboxylate + NADP(+) = 3-dehydro-4-methylzymosterol + CO2 + NADPH. The protein operates within steroid biosynthesis; zymosterol biosynthesis; zymosterol from lanosterol: step 4/6. It functions in the pathway steroid metabolism; ergosterol biosynthesis. Its function is as follows. Sterol-4-alpha-carboxylate 3-dehydrogenase; part of the third module of ergosterol biosynthesis pathway that includes by the late steps of the pathway. Erg26 is a catalytic component of the C-4 demethylation complex that catalyzes the oxidative decarboxylation that results in a reduction of the 3-beta-hydroxy group at the C-3 carbon to an oxo group. The third module or late pathway involves the ergosterol synthesis itself through consecutive reactions that mainly occur in the endoplasmic reticulum (ER) membrane. Firstly, the squalene synthase erg9 catalyzes the condensation of 2 farnesyl pyrophosphate moieties to form squalene, which is the precursor of all steroids. Secondly, squalene is converted into lanosterol by the consecutive action of the squalene epoxidase erg1 and the lanosterol synthase erg7. The lanosterol 14-alpha-demethylase erg11/cyp1 catalyzes C14-demethylation of lanosterol to produce 4,4'-dimethyl cholesta-8,14,24-triene-3-beta-ol. In the next steps, a complex process involving various demethylation, reduction and desaturation reactions catalyzed by the C-14 reductase erg24 and the C-4 demethylation complex erg25-erg26-erg27 leads to the production of zymosterol. Erg28 likely functions in the C-4 demethylation complex reaction by tethering erg26 and Erg27 to the endoplasmic reticulum or to facilitate interaction between these proteins. Then, the sterol 24-C-methyltransferase erg6 catalyzes the methyl transfer from S-adenosyl-methionine to the C-24 of zymosterol to form fecosterol. The C-8 sterol isomerase erg2 catalyzes the reaction which results in unsaturation at C-7 in the B ring of sterols and thus converts fecosterol to episterol. The sterol-C5-desaturases erg31 and erg32 then catalyze the introduction of a C-5 double bond in the B ring to produce 5-dehydroepisterol. The C-22 sterol desaturase erg5 further converts 5-dehydroepisterol into ergosta-5,7,22,24(28)-tetraen-3beta-ol by forming the C-22(23) double bond in the sterol side chain. Finally, ergosta-5,7,22,24(28)-tetraen-3beta-ol is substrate of the C-24(28) sterol reductase erg4 to produce ergosterol. In the genus Schizosaccharomyces, a second route exists between lanosterol and fecosterol, via the methylation of lanosterol to eburicol by erg6, followed by C14-demethylation by erg11/cyp1 and C4-demethylation by the demethylation complex erg25-erg26-erg27. This chain is Sterol-4-alpha-carboxylate 3-dehydrogenase erg26, decarboxylating, found in Schizosaccharomyces pombe (strain 972 / ATCC 24843) (Fission yeast).